The sequence spans 830 residues: Periplasmic nitrate reductase (830 aa).

A signal peptide (tat-type signal) is located at residues 1-30 (MTTRREFIKRSAAVTAACTAGISLSGEASN). The 4Fe-4S Mo/W bis-MGD-type domain maps to 40–96 (LKWSKAPCRFCGTGCSVNVAVKDNQVVATHGDIQSEVNRGLNCVKGYFLSKIMYGKD). Residues cysteine 47, cysteine 50, cysteine 54, and cysteine 82 each contribute to the [4Fe-4S] cluster site. Residues lysine 84, glutamine 151, asparagine 176, cysteine 180, 213 to 220 (WGSNMAEM), 244 to 248 (STFQH), methionine 374, glutamine 378, asparagine 484, 510 to 511 (SE), lysine 533, aspartate 560, and 720 to 729 (TGRVLEHWHS) each bind Mo-bis(molybdopterin guanine dinucleotide). Residue tryptophan 796 participates in substrate binding. Mo-bis(molybdopterin guanine dinucleotide) contacts are provided by asparagine 804 and lysine 821.

This sequence belongs to the prokaryotic molybdopterin-containing oxidoreductase family. NasA/NapA/NarB subfamily. Component of the periplasmic nitrate reductase NapAB complex composed of NapA and NapB. It depends on [4Fe-4S] cluster as a cofactor. Mo-bis(molybdopterin guanine dinucleotide) is required as a cofactor. Predicted to be exported by the Tat system. The position of the signal peptide cleavage has not been experimentally proven.

It localises to the periplasm. The enzyme catalyses 2 Fe(II)-[cytochrome] + nitrate + 2 H(+) = 2 Fe(III)-[cytochrome] + nitrite + H2O. Catalytic subunit of the periplasmic nitrate reductase complex NapAB. Receives electrons from NapB and catalyzes the reduction of nitrate to nitrite. This Hahella chejuensis (strain KCTC 2396) protein is Periplasmic nitrate reductase.